A 723-amino-acid chain; its full sequence is BTB/POZ domain-containing protein 18 (723 aa).

In terms of domain architecture, BTB spans 34-102 (CDALLQAEGE…LYTSEMEVSQ (69 aa)). 3 disordered regions span residues 150–176 (APIS…PSPL), 188–350 (EGAH…EEGQ), and 370–394 (EPPL…PSGT). Composition is skewed to polar residues over residues 162 to 174 (RPQT…QTPS) and 195 to 205 (NLPNADSLSDT). 2 stretches are compositionally biased toward low complexity: residues 217–227 (QESRSSPSSQR) and 271–286 (TSTP…SMPT). Basic and acidic residues-rich tracts occupy residues 303–312 (QGVDKQKPGE) and 327–336 (KPAENKKQSP). Position 414 is a phosphoserine (Ser-414). Residues 603–637 (TPDLEITSSQPLDGQGEKLLHFDSSDPSQRSYNHL) form a disordered region. Positions 617 to 626 (QGEKLLHFDS) are enriched in basic and acidic residues. Positions 627 to 636 (SDPSQRSYNH) are enriched in polar residues. Phosphoserine is present on residues Ser-682 and Ser-683. The disordered stretch occupies residues 699 to 723 (LGPTSVPSVWPDPSSESETEVDILT). The span at 713–723 (SESETEVDILT) shows a compositional bias: acidic residues.

Expressed in testis.

The protein resides in the nucleus. Specifically required during spermatogenesis to promote expression of piRNA precursors. The piRNA metabolic process mediates the repression of transposable elements during meiosis by forming complexes composed of piRNAs and Piwi proteins and governs the methylation and subsequent repression of transposons, which is essential for the germline integrity. Acts by facilitating transcription elongation at piRNA loci during pachytene. This Mus musculus (Mouse) protein is BTB/POZ domain-containing protein 18.